The sequence spans 491 residues: Probable glycine dehydrogenase (decarboxylating) subunit 2 (491 aa).

At K273 the chain carries N6-(pyridoxal phosphate)lysine.

This sequence belongs to the GcvP family. C-terminal subunit subfamily. The glycine cleavage system is composed of four proteins: P, T, L and H. In this organism, the P 'protein' is a heterodimer of two subunits. Pyridoxal 5'-phosphate is required as a cofactor.

The catalysed reaction is N(6)-[(R)-lipoyl]-L-lysyl-[glycine-cleavage complex H protein] + glycine + H(+) = N(6)-[(R)-S(8)-aminomethyldihydrolipoyl]-L-lysyl-[glycine-cleavage complex H protein] + CO2. In terms of biological role, the glycine cleavage system catalyzes the degradation of glycine. The P protein binds the alpha-amino group of glycine through its pyridoxal phosphate cofactor; CO(2) is released and the remaining methylamine moiety is then transferred to the lipoamide cofactor of the H protein. The protein is Probable glycine dehydrogenase (decarboxylating) subunit 2 of Bacillus cereus (strain ATCC 10987 / NRS 248).